The following is a 963-amino-acid chain: VPS35 endosomal protein-sorting factor-like (963 aa).

Disordered stretches follow at residues 38 to 71 (ITVTDSKSRRGGRKGSTSSSSSSSSSVAPDPLSS) and 85 to 111 (ASETPTLPHSVSAGELGRKRKEKEEEV). The segment covering 52–63 (GSTSSSSSSSSS) has biased composition (low complexity).

It belongs to the VPS35L family. As to quaternary structure, component of the heterotrimeric retriever complex.

The protein localises to the endosome. In terms of biological role, acts as a component of the retriever complex. The retriever complex is a heterotrimeric complex related to retromer cargo-selective complex (CSC) and essential for retromer-independent retrieval and recycling of numerous cargos such as integrins. The recruitment of the retriever complex to the endosomal membrane involves CCC and WASH complexes. In the endosomes, drives the retrieval and recycling of NxxY-motif-containing cargo proteins by coupling to SNX17, a cargo essential for the homeostatic maintenance of numerous cell surface proteins associated with processes that include cell migration, cell adhesion, nutrient supply and cell signaling. May be involved in copper-dependent atp7a trafficking between the trans-Golgi network and vesicles in the cell periphery. This Danio rerio (Zebrafish) protein is VPS35 endosomal protein-sorting factor-like (vps35l).